Here is a 75-residue protein sequence, read N- to C-terminus: Small ribosomal subunit protein bS18 (75 aa).

Belongs to the bacterial ribosomal protein bS18 family. As to quaternary structure, part of the 30S ribosomal subunit. Forms a tight heterodimer with protein bS6.

Binds as a heterodimer with protein bS6 to the central domain of the 16S rRNA, where it helps stabilize the platform of the 30S subunit. The protein is Small ribosomal subunit protein bS18 of Buchnera aphidicola subsp. Acyrthosiphon pisum (strain 5A).